The sequence spans 205 residues: Potassium-transporting ATPase KdpC subunit (205 aa).

The helical transmembrane segment at 7-27 threads the bilayer; that stretch reads PAIVILVALTIITGLIYPLAM.

It belongs to the KdpC family. As to quaternary structure, the system is composed of three essential subunits: KdpA, KdpB and KdpC.

It is found in the cell inner membrane. Part of the high-affinity ATP-driven potassium transport (or Kdp) system, which catalyzes the hydrolysis of ATP coupled with the electrogenic transport of potassium into the cytoplasm. This subunit acts as a catalytic chaperone that increases the ATP-binding affinity of the ATP-hydrolyzing subunit KdpB by the formation of a transient KdpB/KdpC/ATP ternary complex. The sequence is that of Potassium-transporting ATPase KdpC subunit from Nitrobacter hamburgensis (strain DSM 10229 / NCIMB 13809 / X14).